The chain runs to 259 residues: Ribosomal RNA small subunit methyltransferase A (259 aa).

S-adenosyl-L-methionine is bound by residues Asn12, Leu14, Gly39, Glu60, Asp84, and Asn102.

Belongs to the class I-like SAM-binding methyltransferase superfamily. rRNA adenine N(6)-methyltransferase family. RsmA subfamily.

The protein resides in the cytoplasm. The enzyme catalyses adenosine(1518)/adenosine(1519) in 16S rRNA + 4 S-adenosyl-L-methionine = N(6)-dimethyladenosine(1518)/N(6)-dimethyladenosine(1519) in 16S rRNA + 4 S-adenosyl-L-homocysteine + 4 H(+). Functionally, specifically dimethylates two adjacent adenosines (A1518 and A1519) in the loop of a conserved hairpin near the 3'-end of 16S rRNA in the 30S particle. May play a critical role in biogenesis of 30S subunits. This chain is Ribosomal RNA small subunit methyltransferase A, found in Nitrosospira multiformis (strain ATCC 25196 / NCIMB 11849 / C 71).